Consider the following 118-residue polypeptide: MARIAGVNIPDNKHAVISLTYIFGVGRTTAQKILEAVGIAPSTKVSQLDDTQLDAIRAQVAEYMTEGDLRREVSMNIKRLVDLGCYRGIRHRRNLPVRGQNTKNNARTRKGPTRPLKR.

Positions 93-118 are disordered; that stretch reads RNLPVRGQNTKNNARTRKGPTRPLKR. Residues 106–118 show a composition bias toward basic residues; it reads ARTRKGPTRPLKR.

Belongs to the universal ribosomal protein uS13 family. In terms of assembly, part of the 30S ribosomal subunit. Forms a loose heterodimer with protein S19. Forms two bridges to the 50S subunit in the 70S ribosome.

Functionally, located at the top of the head of the 30S subunit, it contacts several helices of the 16S rRNA. In the 70S ribosome it contacts the 23S rRNA (bridge B1a) and protein L5 of the 50S subunit (bridge B1b), connecting the 2 subunits; these bridges are implicated in subunit movement. Contacts the tRNAs in the A and P-sites. The chain is Small ribosomal subunit protein uS13 from Psychrobacter cryohalolentis (strain ATCC BAA-1226 / DSM 17306 / VKM B-2378 / K5).